The following is a 921-amino-acid chain: MPPKPLRRAGAARSQRTSPEGGAGTASPPGGTRLEVGEAEFVALCDALKAPDSVREKAWMTYQSLAAADGASAYNKKKKETWGVCIFIVAIDLDEMTFTFTELLKSLSISVCTFFQFLKEVDVNMDTVSTKVDSTVSRLKKKYDVLLALYHKFERTCGLIYLEQPSSEISAELSSVLVLKNYWITFLLAKGKVLQMEDDLVISFQLLLCVLDYFIKLSPPAMLKEPYKSAVTALTVNGSTRTPRRGQNRNARASKQIDTDTKVIEILCKEHDCNLDEVKNVYFTSFIPFLNSLGVVASNGLPEVDVLSKQYDELYLKNKDIDARLFLDHDETLQPDVIACSQLERTPRKNNPDEEVNHVLPQTPVRAAMNTIQQLMMILNSATDKPSDTLIAYFNNCTVNPEDSILKRVESLGHIFKKKFAEAVGQGCAEIGSQRYQLGVRLYYRVMESMLKSEEERLSVHNFSKLLNDNIFHTSLLACALEIVMATYGRTASQSDGTSAETDLSFPWILNVFDLKAFDFYKVIESFIKVEPSLTRDMIKHLERCEHRIMESLAWQSDSPLFDLIKQSKEREGQTDQPEPTSTLNLPLQHNHTAADLYLSPVRSPKKKASGHPQSGTSNPDAQPSATSQTQKPQKSTSLSLFYKKVFRLAYLRLHTLFFRLLSEHPDLEPLIWTLFQHTLQNESELMRDRHLDQIMMCSMYGICKVKNVDLRFKTIVSAYKELPNTNQETFKRVLIREEQYDSIIVFYNLVFMQKLKTNILQYASNRPPTLSPIPHIPRSPYQFSNSPRRVPAGNNIYISPLKSPYKFSDGFHSPTKMTPRSRILVSIGETFGTSEKFQKINQMVCNSESHVKRSAEPSDAPKPLKRLRFDIEGQDEADGGKHLPQESKFQQKLAEMTSTRTRMQKQKLNDGNDTSANEEK.

2 disordered regions span residues 1 to 31 (MPPK…PPGG) and 603 to 634 (RSPK…QKPQ). Polar residues predominate over residues 612-634 (HPQSGTSNPDAQPSATSQTQKPQ). The Bipartite nuclear localization signal motif lies at 853–869 (KRSAEPSDAPKPLKRLR). Residues 873-921 (EGQDEADGGKHLPQESKFQQKLAEMTSTRTRMQKQKLNDGNDTSANEEK) form a disordered region. Polar residues predominate over residues 910 to 921 (NDGNDTSANEEK).

This sequence belongs to the retinoblastoma protein (RB) family. In terms of assembly, interacts with and sequesters the E2F1 transcription factor, thereby inhibiting E2F1 transcription. Interacts with SUV39H1, KMT5B and KMT5C. As to quaternary structure, (Microbial infection) Interacts with, and is inhibited by fowl adenovirus 1 protein GAM-1. In terms of processing, phosphorylated in G1, thereby releasing E2F1 which is then able to activate cell growth. Dephosphorylated at the late M phase. Phosphorylation of domain C promotes interaction between the C-terminal domain C and the Pocket domain, and thereby inhibits interactions with heterodimeric E2F/DP transcription factor complexes.

Its subcellular location is the nucleus. The protein resides in the cytoplasm. Functionally, tumor suppressor that is a key regulator of the G1/S transition of the cell cycle. The hypophosphorylated form binds transcription regulators of the E2F family, preventing transcription of E2F-responsive genes. Both physically blocks E2Fs transactivating domain and recruits chromatin-modifying enzymes that actively repress transcription. Cyclin and CDK-dependent phosphorylation of RB1 induces its dissociation from E2Fs, thereby activating transcription of E2F responsive genes and triggering entry into S phase. RB1 also promotes the G0-G1 transition upon phosphorylation and activation by CDK3/cyclin-C. In Gallus gallus (Chicken), this protein is Retinoblastoma-associated protein (RB1).